A 79-amino-acid polypeptide reads, in one-letter code: uncharacterized protein (79 aa).

The first 24 residues, 1-24 (MKMNPCTVILCKSLFFFCLFQVDC), serve as a signal peptide directing secretion. An N-linked (GlcNAc...) asparagine glycan is attached at Asn-33.

The protein localises to the secreted. This is an uncharacterized protein from Saccharomyces cerevisiae (strain ATCC 204508 / S288c) (Baker's yeast).